Consider the following 63-residue polypeptide: Large ribosomal subunit protein bL35 (63 aa).

The segment at 1–22 is disordered; sequence MPKMKTKSGATKRFKKTATGFK.

Belongs to the bacterial ribosomal protein bL35 family.

The chain is Large ribosomal subunit protein bL35 from Marinobacter nauticus (strain ATCC 700491 / DSM 11845 / VT8) (Marinobacter aquaeolei).